The sequence spans 211 residues: Troponin I, cardiac muscle (211 aa).

A disordered region spans residues 1–24 (MADESSDAAGEPQPAPAPVRRRSS). N-acetylalanine is present on Ala-2. Residues Ser-5 and Ser-6 each carry the phosphoserine modification. Phosphoserine; by PKA and PKD/PRKD1 occurs at positions 23 and 24. A Phosphotyrosine modification is found at Tyr-27. Thr-32 bears the Phosphothreonine; by STK4/MST1 mark. The interval 33-80 (EPHAKKKSKISASRKLQLKTLMLQIAKQEMEREAEERRGEKGRVLRTR) is involved in binding TNC. Residues Ser-43 and Ser-45 each carry the phosphoserine; by PKC/PRKCE modification. Position 52 is a phosphothreonine; by STK4/MST1 (Thr-52). Thr-79 carries the phosphothreonine modification. Thr-130 and Thr-144 each carry phosphothreonine; by STK4/MST1. The interval 130–151 (TQKIYDLRGKFKRPTLRRVRIS) is involved in binding TNC and actin. Phosphoserine occurs at positions 151, 167, and 200.

It belongs to the troponin I family. Interacts with TRIM63. Binds to actin and tropomyosin. Interacts with STK4/MST1. Phosphorylated at Ser-23 and Ser-24 by PRKD1; phosphorylation reduces myofilament calcium sensitivity. Phosphorylated preferentially at Thr-32. Phosphorylation by STK4/MST1 alters its binding affinity to TNNC1 (cardiac Tn-C) and TNNT2 (cardiac Tn-T). Phosphorylated at Ser-43 and Ser-45 by PRKCE; phosphorylation increases myocardium contractile dysfunction.

Troponin I is the inhibitory subunit of troponin, the thin filament regulatory complex which confers calcium-sensitivity to striated muscle actomyosin ATPase activity. This Mus musculus (Mouse) protein is Troponin I, cardiac muscle (Tnni3).